A 444-amino-acid chain; its full sequence is Protein CLP1 homolog (444 aa).

Residues E33, K72, and D140 to T145 each bind ATP.

It belongs to the Clp1 family. Clp1 subfamily. As to quaternary structure, interacts with PCFS4 and SYM5. Forms a complex with cleavage and polyadenylation specificity factor (CPSF) subunits CPSF30, CPSF100, PCFS1, PCFS4, PCFS5, CPSF160 and FY.

Its subcellular location is the nucleus. Required for endonucleolytic cleavage during polyadenylation-dependent pre-mRNA 3'-end formation. Functions in gametophyte, embryo and postembryotic development. The protein is Protein CLP1 homolog (CLPS3) of Arabidopsis thaliana (Mouse-ear cress).